The chain runs to 174 residues: Co-chaperone protein HscB homolog (174 aa).

Positions 2 to 74 (NYFDLFNVVP…LRRAEHMLSL (73 aa)) constitute a J domain.

The protein belongs to the HscB family. Interacts with HscA and stimulates its ATPase activity.

In terms of biological role, co-chaperone involved in the maturation of iron-sulfur cluster-containing proteins. Seems to help targeting proteins to be folded toward HscA. The sequence is that of Co-chaperone protein HscB homolog from Shewanella frigidimarina (strain NCIMB 400).